We begin with the raw amino-acid sequence, 311 residues long: Methionyl-tRNA formyltransferase (311 aa).

112 to 115 (SLLP) is a binding site for (6S)-5,6,7,8-tetrahydrofolate.

This sequence belongs to the Fmt family.

The enzyme catalyses L-methionyl-tRNA(fMet) + (6R)-10-formyltetrahydrofolate = N-formyl-L-methionyl-tRNA(fMet) + (6S)-5,6,7,8-tetrahydrofolate + H(+). Attaches a formyl group to the free amino group of methionyl-tRNA(fMet). The formyl group appears to play a dual role in the initiator identity of N-formylmethionyl-tRNA by promoting its recognition by IF2 and preventing the misappropriation of this tRNA by the elongation apparatus. The sequence is that of Methionyl-tRNA formyltransferase from Bradyrhizobium sp. (strain BTAi1 / ATCC BAA-1182).